We begin with the raw amino-acid sequence, 365 residues long: tRNA N6-adenosine threonylcarbamoyltransferase (365 aa).

Positions 119 and 123 each coordinate Fe cation. Residues 141–145 (LVSGG), aspartate 174, and glycine 187 each bind substrate. The interval 184-203 (QPGGPSVEGEARQGDPKRFR) is disordered. Over residues 192–201 (GEARQGDPKR) the composition is skewed to basic and acidic residues. Asparagine 289 contacts substrate. Residue aspartate 317 coordinates Fe cation. The segment at 342–365 (ARPRWPLDQSSPAMLGSGKKGAKA) is disordered.

Belongs to the KAE1 / TsaD family. The cofactor is Fe(2+).

The protein localises to the cytoplasm. The catalysed reaction is L-threonylcarbamoyladenylate + adenosine(37) in tRNA = N(6)-L-threonylcarbamoyladenosine(37) in tRNA + AMP + H(+). Required for the formation of a threonylcarbamoyl group on adenosine at position 37 (t(6)A37) in tRNAs that read codons beginning with adenine. Is involved in the transfer of the threonylcarbamoyl moiety of threonylcarbamoyl-AMP (TC-AMP) to the N6 group of A37, together with TsaE and TsaB. TsaD likely plays a direct catalytic role in this reaction. This chain is tRNA N6-adenosine threonylcarbamoyltransferase, found in Ruegeria pomeroyi (strain ATCC 700808 / DSM 15171 / DSS-3) (Silicibacter pomeroyi).